The primary structure comprises 245 residues: Triosephosphate isomerase (245 aa).

9 to 11 (NWK) lines the substrate pocket. H92 acts as the Electrophile in catalysis. The active-site Proton acceptor is E164. Residues G170, S209, and 230 to 231 (GG) contribute to the substrate site.

It belongs to the triosephosphate isomerase family. Homodimer.

It localises to the cytoplasm. The enzyme catalyses D-glyceraldehyde 3-phosphate = dihydroxyacetone phosphate. The protein operates within carbohydrate biosynthesis; gluconeogenesis. It participates in carbohydrate degradation; glycolysis; D-glyceraldehyde 3-phosphate from glycerone phosphate: step 1/1. Functionally, involved in the gluconeogenesis. Catalyzes stereospecifically the conversion of dihydroxyacetone phosphate (DHAP) to D-glyceraldehyde-3-phosphate (G3P). The chain is Triosephosphate isomerase from Cupriavidus necator (strain ATCC 17699 / DSM 428 / KCTC 22496 / NCIMB 10442 / H16 / Stanier 337) (Ralstonia eutropha).